The chain runs to 368 residues: G-protein coupled receptor 62 (368 aa).

At 1–18 (MANSTGLNASEVAGSLGL) the chain is on the extracellular side. 2 N-linked (GlcNAc...) asparagine glycosylation sites follow: Asn3 and Asn8. Residues 19 to 39 (ILAAVVEVGALLGNGALLVVV) form a helical membrane-spanning segment. Residues 40 to 53 (LRTPGLRDALYLAH) are Cytoplasmic-facing. A helical membrane pass occupies residues 54 to 74 (LCVVDLLAAASIMPLGLLAAP). Residues 75–91 (PPGLGRVRLGPAPCRAA) lie on the Extracellular side of the membrane. A helical transmembrane segment spans residues 92–112 (RFLSAALLPACTLGVAALGLA). Residues 113–129 (RYRLIVHPLRPGSRPPP) lie on the Cytoplasmic side of the membrane. Residues 130 to 150 (VLVLTAVWAAAGLLGALSLLG) form a helical membrane-spanning segment. Residues 151 to 177 (TPPAPPPAPARCSVLAGGLGPFRPLWA) lie on the Extracellular side of the membrane. The chain crosses the membrane as a helical span at residues 178–198 (LLAFALPALLLLGAYGGIFVV). Residues 199-239 (ARRAALRPPRPARGSRLHSDSLDSRLSILPPLRPRLPGGKA) are Cytoplasmic-facing. Residues 240–260 (ALAPALAVGQFAACWLPYGCA) form a helical membrane-spanning segment. Residues 261 to 272 (CLAPAARAAEAE) are Extracellular-facing. Residues 273 to 293 (AAVTWVAYSAFAAHPFLYGLL) traverse the membrane as a helical segment. The Cytoplasmic portion of the chain corresponds to 294-368 (QRPVRLALGR…YQGPPESSLS (75 aa)). Residues 332–368 (RPPEGPAVGPSEAPEQTPELAGGRSPAYQGPPESSLS) form a disordered region.

This sequence belongs to the G-protein coupled receptor 1 family. Homodimers. Forms heterodimer with MTNR1B. Interacts with ARRB1 and ARRB2 in a spontaneous and agonist-independent manner; leading to the internalization of GPR62 in the endosomal compartment. Expressed in brain; detected in the basal forebrain, frontal cortex, caudate, putamen, thalamus and hippocampus.

It localises to the cell membrane. It is found in the endosome membrane. Its function is as follows. Orphan G-protein coupled receptor. Constitutively activates the G(q/11)/inositol phosphate and the G(s)-alpha/cAMP signaling pathways. Has spontaneous activity for beta-arrestin recruitment. Shows a reciprocal modulation of signaling functions with the melatonin receptor MTNR1B most likely through receptor heteromerization. This is G-protein coupled receptor 62 (GPR62) from Homo sapiens (Human).